Consider the following 293-residue polypeptide: Formamidopyrimidine-DNA glycosylase (293 aa).

P2 acts as the Schiff-base intermediate with DNA in catalysis. The active-site Proton donor is the E3. Catalysis depends on K58, which acts as the Proton donor; for beta-elimination activity. DNA contacts are provided by H104, R123, and K166. Residues A257–K293 form an FPG-type zinc finger. R283 functions as the Proton donor; for delta-elimination activity in the catalytic mechanism.

It belongs to the FPG family. Monomer. Requires Zn(2+) as cofactor.

It carries out the reaction Hydrolysis of DNA containing ring-opened 7-methylguanine residues, releasing 2,6-diamino-4-hydroxy-5-(N-methyl)formamidopyrimidine.. The catalysed reaction is 2'-deoxyribonucleotide-(2'-deoxyribose 5'-phosphate)-2'-deoxyribonucleotide-DNA = a 3'-end 2'-deoxyribonucleotide-(2,3-dehydro-2,3-deoxyribose 5'-phosphate)-DNA + a 5'-end 5'-phospho-2'-deoxyribonucleoside-DNA + H(+). Functionally, involved in base excision repair of DNA damaged by oxidation or by mutagenic agents. Acts as a DNA glycosylase that recognizes and removes damaged bases. Has a preference for oxidized purines, such as 7,8-dihydro-8-oxoguanine (8-oxoG). Has AP (apurinic/apyrimidinic) lyase activity and introduces nicks in the DNA strand. Cleaves the DNA backbone by beta-delta elimination to generate a single-strand break at the site of the removed base with both 3'- and 5'-phosphates. The polypeptide is Formamidopyrimidine-DNA glycosylase (Rhodopseudomonas palustris (strain BisA53)).